The following is a 470-amino-acid chain: Sorting nexin-17 (470 aa).

One can recognise a PX domain in the interval Met-1 to Thr-109. The a 1,2-diacyl-sn-glycero-3-phospho-(1D-myo-inositol-3-phosphate) site is built by Arg-36, Ser-38, Lys-62, and Arg-75. Residues Glu-115–Trp-206 form the Ras-associating domain. The tract at residues Glu-115 to Leu-432 is FERM-like. Residues Gly-270 to Leu-432 are PTB-like F3 module. Phosphoserine is present on residues Ser-336, Ser-407, Ser-409, Ser-415, Ser-421, Ser-437, and Ser-440. The disordered stretch occupies residues Val-400–Thr-425.

Belongs to the sorting nexin family. Monomer. Interacts with APP (via cytoplasmic YXNPXY motif). Interacts with KIF1B. Interacts with the C-termini of P-selectin, PTC, LDLR, VLDLR, LRP1 and LRP8. Interacts with KRIT1 (via N-terminus). Interacts with HRAS. Interacts with ITGB1 and ITGB5 (via NPxY motif). Interacts with CCDC22 and CCDC93; the interaction associates SNX17 with the CCC complex. Interacts (via C-terminus) with VPS26C and VPS35L; the interactions are direct and associate SNX17 with the retriever complex.

The protein localises to the cytoplasm. The protein resides in the early endosome. It is found in the cytoplasmic vesicle membrane. Its function is as follows. Critical regulator of endosomal recycling of numerous surface proteins, including integrins, signaling receptor and channels. Binds to NPxY sequences in the cytoplasmic tails of target cargos. Associates with retriever and CCC complexes to prevent lysosomal degradation and promote cell surface recycling of numerous cargos such as integrins ITGB1, ITGB5 and their associated alpha subunits. Also required for maintenance of normal cell surface levels of APP and LRP1. Interacts with membranes containing phosphatidylinositol 3-phosphate (PtdIns(3P)). In Pongo abelii (Sumatran orangutan), this protein is Sorting nexin-17 (SNX17).